Here is a 324-residue protein sequence, read N- to C-terminus: Beta-ketoacyl-[acyl-carrier-protein] synthase III (324 aa).

Residues cysteine 116 and histidine 251 contribute to the active site. The tract at residues 252–256 (QANLR) is ACP-binding. Asparagine 281 is a catalytic residue.

Belongs to the thiolase-like superfamily. FabH family. In terms of assembly, homodimer.

It is found in the cytoplasm. The enzyme catalyses malonyl-[ACP] + acetyl-CoA + H(+) = 3-oxobutanoyl-[ACP] + CO2 + CoA. The protein operates within lipid metabolism; fatty acid biosynthesis. Functionally, catalyzes the condensation reaction of fatty acid synthesis by the addition to an acyl acceptor of two carbons from malonyl-ACP. Catalyzes the first condensation reaction which initiates fatty acid synthesis and may therefore play a role in governing the total rate of fatty acid production. Possesses both acetoacetyl-ACP synthase and acetyl transacylase activities. Its substrate specificity determines the biosynthesis of branched-chain and/or straight-chain of fatty acids. This is Beta-ketoacyl-[acyl-carrier-protein] synthase III from Xylella fastidiosa (strain Temecula1 / ATCC 700964).